The chain runs to 580 residues: Glutamine--tRNA ligase (580 aa).

The 'HIGH' region signature appears at 41–51; sequence PEPNGYLHIGH. ATP contacts are provided by residues 42–44 and 48–54; these read EPN and HIGHAKA. Residues Asp-74 and Tyr-218 each coordinate L-glutamine. ATP contacts are provided by residues Thr-237, 285-286, and 293-295; these read RL and MSK. Positions 292–296 match the 'KMSKS' region motif; sequence VMSKR.

The protein belongs to the class-I aminoacyl-tRNA synthetase family. In terms of assembly, monomer.

The protein localises to the cytoplasm. The catalysed reaction is tRNA(Gln) + L-glutamine + ATP = L-glutaminyl-tRNA(Gln) + AMP + diphosphate. The chain is Glutamine--tRNA ligase from Xylella fastidiosa (strain M12).